A 159-amino-acid polypeptide reads, in one-letter code: Eukaryotic translation initiation factor 5A-5 (159 aa).

The span at 1 to 12 (MSDEEHHFESKA) shows a compositional bias: basic and acidic residues. The tract at residues 1 to 23 (MSDEEHHFESKADAGASKTYPQQ) is disordered. Lysine 52 carries the post-translational modification Hypusine.

This sequence belongs to the eIF-5A family. Lys-52 undergoes hypusination, a unique post-translational modification that consists in the addition of a butylamino group from spermidine to lysine side chain, leading to the formation of the unusual amino acid hypusine. eIF-5As are the only known proteins to undergo this modification, which is essential for their function.

Translation factor that promotes translation elongation and termination, particularly upon ribosome stalling at specific amino acid sequence contexts. Binds between the exit (E) and peptidyl (P) site of the ribosome and promotes rescue of stalled ribosome: specifically required for efficient translation of polyproline-containing peptides as well as other motifs that stall the ribosome. Acts as a ribosome quality control (RQC) cofactor by joining the RQC complex to facilitate peptidyl transfer during CAT tailing step. This Solanum tuberosum (Potato) protein is Eukaryotic translation initiation factor 5A-5 (EIF5A5).